Consider the following 395-residue polypeptide: 1-deoxy-D-xylulose 5-phosphate reductoisomerase (395 aa).

Residues T10, G11, S12, I13, N38, and N122 each contribute to the NADPH site. K123 contacts 1-deoxy-D-xylulose 5-phosphate. E124 contacts NADPH. Mn(2+) is bound at residue D148. The 1-deoxy-D-xylulose 5-phosphate site is built by S149, E150, S178, and H200. E150 is a Mn(2+) binding site. G206 contacts NADPH. Positions 213, 218, 219, and 222 each coordinate 1-deoxy-D-xylulose 5-phosphate. E222 lines the Mn(2+) pocket.

The protein belongs to the DXR family. Mg(2+) is required as a cofactor. It depends on Mn(2+) as a cofactor.

The catalysed reaction is 2-C-methyl-D-erythritol 4-phosphate + NADP(+) = 1-deoxy-D-xylulose 5-phosphate + NADPH + H(+). The protein operates within isoprenoid biosynthesis; isopentenyl diphosphate biosynthesis via DXP pathway; isopentenyl diphosphate from 1-deoxy-D-xylulose 5-phosphate: step 1/6. Its function is as follows. Catalyzes the NADPH-dependent rearrangement and reduction of 1-deoxy-D-xylulose-5-phosphate (DXP) to 2-C-methyl-D-erythritol 4-phosphate (MEP). This Elusimicrobium minutum (strain Pei191) protein is 1-deoxy-D-xylulose 5-phosphate reductoisomerase.